The chain runs to 211 residues: Probable GTP-binding protein EngB (211 aa).

Residues 30–204 (EGFEVAFAGR…YTVLAGWMEL (175 aa)) enclose the EngB-type G domain. GTP-binding positions include 38–45 (GRSNAGKS), 64–68 (GRTQL), 82–85 (DLPG), 149–152 (TKAD), and 182–185 (LFSA). Positions 45 and 66 each coordinate Mg(2+).

It belongs to the TRAFAC class TrmE-Era-EngA-EngB-Septin-like GTPase superfamily. EngB GTPase family. Requires Mg(2+) as cofactor.

Necessary for normal cell division and for the maintenance of normal septation. The polypeptide is Probable GTP-binding protein EngB (Pseudomonas syringae pv. tomato (strain ATCC BAA-871 / DC3000)).